We begin with the raw amino-acid sequence, 330 residues long: Phospho-N-acetylmuramoyl-pentapeptide-transferase (330 aa).

The next 10 helical transmembrane spans lie at 3–23 (SVVLGAAVAFFVTVTLGSSFI), 49–69 (TPTMGGVLMLMGLVAGLAVVA), 71–91 (PNPATFSVLLIVAATAGVGLY), 111–131 (FLLLSLVVVLADVMALRYVGV), 145–165 (VLGPGVVGVGLFSVLMLFVIV), 179–199 (GLAAGAGGIALLTYTAIAFLE), 204–224 (LAIICGAMVGAIIGFLWYNSH), 228–248 (IFMGDTGSLAIGGVLSAAAIL), 256–276 (PVIGGLFVIVALSVMIQVVVF), and 307–327 (FWIVQSAFSALGFLMYYFFLY).

Belongs to the glycosyltransferase 4 family. MraY subfamily. Requires Mg(2+) as cofactor.

The protein resides in the cell membrane. The catalysed reaction is UDP-N-acetyl-alpha-D-muramoyl-L-alanyl-gamma-D-glutamyl-meso-2,6-diaminopimeloyl-D-alanyl-D-alanine + di-trans,octa-cis-undecaprenyl phosphate = di-trans,octa-cis-undecaprenyl diphospho-N-acetyl-alpha-D-muramoyl-L-alanyl-D-glutamyl-meso-2,6-diaminopimeloyl-D-alanyl-D-alanine + UMP. The protein operates within cell wall biogenesis; peptidoglycan biosynthesis. In terms of biological role, catalyzes the initial step of the lipid cycle reactions in the biosynthesis of the cell wall peptidoglycan: transfers peptidoglycan precursor phospho-MurNAc-pentapeptide from UDP-MurNAc-pentapeptide onto the lipid carrier undecaprenyl phosphate, yielding undecaprenyl-pyrophosphoryl-MurNAc-pentapeptide, known as lipid I. In Rubrobacter xylanophilus (strain DSM 9941 / JCM 11954 / NBRC 16129 / PRD-1), this protein is Phospho-N-acetylmuramoyl-pentapeptide-transferase.